The primary structure comprises 229 residues: 23 kDa piroplasm membrane protein (229 aa).

The signal sequence occupies residues 1–19 (MNKYFKVFFFVLLTHALKS). At 20 to 203 (ALIFGQATLQ…EKEDTNKKKY (184 aa)) the chain is on the extracellular side. Residues 204 to 224 (VLMVVVVVVFVVVASLVVFLV) traverse the membrane as a helical segment. Residues 225 to 229 (KFCLK) lie on the Cytoplasmic side of the membrane.

Its subcellular location is the membrane. This chain is 23 kDa piroplasm membrane protein, found in Theileria parva (East coast fever infection agent).